A 265-amino-acid polypeptide reads, in one-letter code: Type III pantothenate kinase (265 aa).

Residue 6-13 participates in ATP binding; that stretch reads DVGNTHTV. Residue 112–115 coordinates substrate; it reads GADR. Aspartate 114 functions as the Proton acceptor in the catalytic mechanism. Aspartate 134 serves as a coordination point for K(+). Threonine 137 contributes to the ATP binding site. Position 189 (threonine 189) interacts with substrate.

This sequence belongs to the type III pantothenate kinase family. Homodimer. It depends on NH4(+) as a cofactor. The cofactor is K(+).

The protein resides in the cytoplasm. The enzyme catalyses (R)-pantothenate + ATP = (R)-4'-phosphopantothenate + ADP + H(+). Its pathway is cofactor biosynthesis; coenzyme A biosynthesis; CoA from (R)-pantothenate: step 1/5. Functionally, catalyzes the phosphorylation of pantothenate (Pan), the first step in CoA biosynthesis. This is Type III pantothenate kinase from Streptomyces avermitilis (strain ATCC 31267 / DSM 46492 / JCM 5070 / NBRC 14893 / NCIMB 12804 / NRRL 8165 / MA-4680).